The sequence spans 293 residues: Ribosomal protein L11 methyltransferase (293 aa).

S-adenosyl-L-methionine is bound by residues T145, G166, D188, and N230.

It belongs to the methyltransferase superfamily. PrmA family.

It localises to the cytoplasm. It catalyses the reaction L-lysyl-[protein] + 3 S-adenosyl-L-methionine = N(6),N(6),N(6)-trimethyl-L-lysyl-[protein] + 3 S-adenosyl-L-homocysteine + 3 H(+). Functionally, methylates ribosomal protein L11. The polypeptide is Ribosomal protein L11 methyltransferase (Klebsiella pneumoniae subsp. pneumoniae (strain ATCC 700721 / MGH 78578)).